Consider the following 651-residue polypeptide: Probable potassium transport system protein Kup 3 (651 aa).

A run of 12 helical transmembrane segments spans residues 38–58 (FWAL…TSPL), 77–97 (VLVL…VTAK), 129–149 (LFLL…SMIT), 166–186 (PALE…LFGV), 197–217 (FFGP…AMHI), 242–262 (IGLV…ALYA), 276–296 (WLGF…ALVL), 314–334 (LVLP…QAVI), 366–386 (IYLP…VLLF), 396–416 (YGIA…VVIW), 421–441 (WSWP…AMFF), and 448–468 (LLDG…VIWT).

It belongs to the HAK/KUP transporter (TC 2.A.72) family.

It localises to the cell inner membrane. The catalysed reaction is K(+)(in) + H(+)(in) = K(+)(out) + H(+)(out). In terms of biological role, transport of potassium into the cell. Likely operates as a K(+):H(+) symporter. This is Probable potassium transport system protein Kup 3 from Rhodopseudomonas palustris (strain ATCC BAA-98 / CGA009).